The chain runs to 154 residues: UPF0178 protein BAV3236 (154 aa).

The protein belongs to the UPF0178 family.

The polypeptide is UPF0178 protein BAV3236 (Bordetella avium (strain 197N)).